Here is a 368-residue protein sequence, read N- to C-terminus: Mitogen-activated protein kinase HOG1B (368 aa).

Residues 20-299 form the Protein kinase domain; it reads YVNLEPVGMG…ASQALAHPYL (280 aa). Residues 26-34 and Lys49 contribute to the ATP site; that span reads VGMGAFGLV. Asp141 functions as the Proton acceptor in the catalytic mechanism. Thr171 is subject to Phosphothreonine. The TXY motif lies at 171 to 173; the sequence is TGY. A Phosphotyrosine modification is found at Tyr173.

This sequence belongs to the protein kinase superfamily. Ser/Thr protein kinase family. MAP kinase subfamily. HOG1 sub-subfamily. The cofactor is Mg(2+). Post-translationally, phosphorylated. Dually phosphorylated on Thr-171 and Tyr-173, which activates the enzyme. Rapidly dephosphorylated upon either hypo- or hyperosmotic shock.

It is found in the cytoplasm. The protein resides in the nucleus. The catalysed reaction is L-seryl-[protein] + ATP = O-phospho-L-seryl-[protein] + ADP + H(+). The enzyme catalyses L-threonyl-[protein] + ATP = O-phospho-L-threonyl-[protein] + ADP + H(+). With respect to regulation, activated by tyrosine and threonine phosphorylation. Functionally, mitogen-activated protein kinase involved in a signal transduction pathway that is activated by changes in the osmolarity of the extracellular environment. Controls osmotic regulation of transcription of target genes. This is Mitogen-activated protein kinase HOG1B (HOG1B) from Wallemia ichthyophaga (strain EXF-994 / CBS 113033).